The chain runs to 852 residues: RNA-binding protein 10 (852 aa).

Composition is skewed to basic and acidic residues over residues 1 to 14 (MEYE…DRTG) and 21 to 45 (RSQD…RSYP). The interval 1–78 (MEYERRGGRG…RGQLQSHGVQ (78 aa)) is disordered. The RRM 1 domain occupies 37 to 132 (RDMDYRSYPR…QKVSMHYSDP (96 aa)). S61 carries the post-translational modification Phosphoserine. The segment at 135 to 165 (KINEDWLCNKCGVQNFKRREKCFKCGVPKSE) adopts a RanBP2-type zinc-finger fold. Residues 223-307 (DTIILRNLNP…KTINVEFAKG (85 aa)) enclose the RRM 2 domain. An N6-acetyllysine modification is found at K306. 6 disordered regions span residues 343 to 365 (GGES…QQDE), 386 to 410 (KGPG…EGGT), 426 to 446 (APGL…ATNS), 459 to 489 (SELQ…YPVP), 542 to 568 (EQSA…HKTK), and 634 to 675 (DLPK…EEKL). The segment covering 430–446 (YQQSAEGSSGQGTATNS) has biased composition (polar residues). Low complexity predominate over residues 463-484 (SPTHPSSALPPATSPTAPESYS). Residues 545–561 (ADGHKDTGASSKEGKEK) show a composition bias toward basic and acidic residues. S640, S645, S655, S658, and S660 each carry phosphoserine. The span at 665–675 (ERGGPEREEKL) shows a compositional bias: basic and acidic residues. A C2H2-type; atypical zinc finger spans residues 681–706 (LACLLCRRQFPSKEALIRHQQLSGLH). Phosphoserine is present on residues S703, S719, and S767. Residues 740-783 (AAERREKYGIPEPPEPKRRKYGGISTASVDFEQPTRDGLGSDNI) form a disordered region. A G-patch domain is found at 780–826 (SDNIGSRMLQAMGWKEGSGLGRKKQGIVTPIEAQTRVRGSGLGARGS). At R824 the chain carries Omega-N-methylarginine.

In terms of assembly, associates with the spliceosome. Component of a large chromatin remodeling complex, at least composed of MYSM1, PCAF, RBM10 and KIF11/TRIP5.

It localises to the nucleus. Functionally, binds to ssRNA containing the consensus sequence 5'-AGGUAA-3'. May be involved in post-transcriptional processing, most probably in mRNA splicing. Binds to RNA homopolymers, with a preference for poly(G) and poly(U) and little for poly(A). May bind to specific miRNA hairpins. The chain is RNA-binding protein 10 from Rattus norvegicus (Rat).